Reading from the N-terminus, the 739-residue chain is DNA ligase (739 aa).

Residues 1 to 29 (MTANRPALPTRDKAVSDLSATEASDEHAA) are disordered. NAD(+)-binding positions include 51 to 55 (DADYD), 100 to 101 (SL), and glutamate 134. Lysine 136 (N6-AMP-lysine intermediate) is an active-site residue. Residues arginine 157, glutamate 194, lysine 311, and lysine 335 each contribute to the NAD(+) site. 4 residues coordinate Zn(2+): cysteine 440, cysteine 443, cysteine 464, and cysteine 470. A disordered region spans residues 592–612 (PTEMEEASEETPPTRRRKPQG). The 78-residue stretch at 662–739 (ASTSPVSGKT…TEDEWFDLVG (78 aa)) folds into the BRCT domain.

This sequence belongs to the NAD-dependent DNA ligase family. LigA subfamily. The cofactor is Mg(2+). Mn(2+) serves as cofactor.

The catalysed reaction is NAD(+) + (deoxyribonucleotide)n-3'-hydroxyl + 5'-phospho-(deoxyribonucleotide)m = (deoxyribonucleotide)n+m + AMP + beta-nicotinamide D-nucleotide.. Functionally, DNA ligase that catalyzes the formation of phosphodiester linkages between 5'-phosphoryl and 3'-hydroxyl groups in double-stranded DNA using NAD as a coenzyme and as the energy source for the reaction. It is essential for DNA replication and repair of damaged DNA. The sequence is that of DNA ligase from Azorhizobium caulinodans (strain ATCC 43989 / DSM 5975 / JCM 20966 / LMG 6465 / NBRC 14845 / NCIMB 13405 / ORS 571).